The following is a 393-amino-acid chain: Formate-dependent phosphoribosylglycinamide formyltransferase (393 aa).

Residues 22–23 (EL) and glutamate 82 contribute to the N(1)-(5-phospho-beta-D-ribosyl)glycinamide site. ATP-binding positions include arginine 114, lysine 155, 160–165 (SSGKGQ), 195–198 (ESFV), and glutamate 203. The ATP-grasp domain maps to 119 to 308 (RLAAEELGLR…EFALHVRAVL (190 aa)). Mg(2+) contacts are provided by glutamate 267 and glutamate 279. Residues aspartate 286, lysine 356, and 363–364 (RR) contribute to the N(1)-(5-phospho-beta-D-ribosyl)glycinamide site.

It belongs to the PurK/PurT family. Homodimer.

It catalyses the reaction N(1)-(5-phospho-beta-D-ribosyl)glycinamide + formate + ATP = N(2)-formyl-N(1)-(5-phospho-beta-D-ribosyl)glycinamide + ADP + phosphate + H(+). It participates in purine metabolism; IMP biosynthesis via de novo pathway; N(2)-formyl-N(1)-(5-phospho-D-ribosyl)glycinamide from N(1)-(5-phospho-D-ribosyl)glycinamide (formate route): step 1/1. Functionally, involved in the de novo purine biosynthesis. Catalyzes the transfer of formate to 5-phospho-ribosyl-glycinamide (GAR), producing 5-phospho-ribosyl-N-formylglycinamide (FGAR). Formate is provided by PurU via hydrolysis of 10-formyl-tetrahydrofolate. In Oleidesulfovibrio alaskensis (strain ATCC BAA-1058 / DSM 17464 / G20) (Desulfovibrio alaskensis), this protein is Formate-dependent phosphoribosylglycinamide formyltransferase.